A 1133-amino-acid polypeptide reads, in one-letter code: Lysylphosphatidylglycerol biosynthesis bifunctional protein LysX (1133 aa).

Residues 1–626 (MTTVDASPGI…LLHHDGSTPD (626 aa)) are phosphatidylglycerol lysyltransferase. 7 helical membrane-spanning segments follow: residues 43–63 (VPAA…IASV), 82–102 (LFNF…LAAA), 109–129 (IAWL…AVDM), 140–160 (FGEN…VLSY), 177–197 (AVLV…VELF), 233–253 (LNAI…IVLF), and 575–595 (LIPR…LPFS). Positions 627-1133 (VSGLQTADVD…TLPFPLAKPH (507 aa)) are lysine--tRNA ligase. Residues Asp1045 and Glu1052 each coordinate Mg(2+).

This sequence in the N-terminal section; belongs to the LPG synthetase family. It in the C-terminal section; belongs to the class-II aminoacyl-tRNA synthetase family. The cofactor is Mg(2+).

It localises to the cell membrane. The catalysed reaction is tRNA(Lys) + L-lysine + ATP = L-lysyl-tRNA(Lys) + AMP + diphosphate. The enzyme catalyses L-lysyl-tRNA(Lys) + a 1,2-diacyl-sn-glycero-3-phospho-(1'-sn-glycerol) = a 1,2-diacyl-sn-glycero-3-phospho-1'-(3'-O-L-lysyl)-sn-glycerol + tRNA(Lys). Catalyzes the production of L-lysyl-tRNA(Lys)transfer and the transfer of a lysyl group from L-lysyl-tRNA(Lys) to membrane-bound phosphatidylglycerol (PG), which produces lysylphosphatidylglycerol (LPG), one of the components of the bacterial membrane with a positive net charge. LPG synthesis contributes to the resistance to cationic antimicrobial peptides (CAMPs) and likely protects M.tuberculosis against the CAMPs produced by competiting microorganisms (bacteriocins). In fact, the modification of anionic phosphatidylglycerol with positively charged L-lysine results in repulsion of the peptides. The protein is Lysylphosphatidylglycerol biosynthesis bifunctional protein LysX (lysX) of Mycobacterium leprae (strain Br4923).